Here is a 182-residue protein sequence, read N- to C-terminus: uncharacterized protein (182 aa).

The first 26 residues, 1 to 26 (MIRALCTIVLIAAGVAVALYLSLVYG), serve as a signal peptide directing secretion. The segment at 68-90 (YTERPYPVSSTQSPTTTQSPTTT) is disordered. Positions 74–90 (PVSSTQSPTTTQSPTTT) are enriched in low complexity.

This is an uncharacterized protein from Dryophytes versicolor (chameleon treefrog).